A 71-amino-acid chain; its full sequence is Kunitz-type serine protease inhibitor HNTX-852 (71 aa).

A signal peptide spans 1–22 (DPSGSPHIRILPQETFEDICRL). Disulfide bonds link Cys20-Cys68 and Cys43-Cys64. One can recognise a BPTI/Kunitz inhibitor domain in the interval 23 to 68 (PSDSGDCLRFFEMWYFDGTTCTKFVYGGYGGNDNRFPTEKACMKRC).

It belongs to the venom Kunitz-type family. 03 (sub-Kunitz) subfamily. As to expression, expressed by the venom gland.

The protein localises to the secreted. Its function is as follows. Serine protease inhibitor that inhibits trypsin at a molar ratio of 1:1. The sequence is that of Kunitz-type serine protease inhibitor HNTX-852 from Cyriopagopus hainanus (Chinese bird spider).